A 399-amino-acid polypeptide reads, in one-letter code: Enoyl-[acyl-carrier-protein] reductase [NADH] (399 aa).

Residues 48–53 (GASTGY), 74–75 (FE), 111–112 (DA), and 139–140 (LA) contribute to the NAD(+) site. Tyr-225 is a substrate binding site. Catalysis depends on Tyr-235, which acts as the Proton donor. NAD(+) contacts are provided by residues Lys-244 and 274 to 276 (VVT).

It belongs to the TER reductase family. Monomer.

It carries out the reaction a 2,3-saturated acyl-[ACP] + NAD(+) = a (2E)-enoyl-[ACP] + NADH + H(+). Its pathway is lipid metabolism; fatty acid biosynthesis. Functionally, involved in the final reduction of the elongation cycle of fatty acid synthesis (FAS II). Catalyzes the reduction of a carbon-carbon double bond in an enoyl moiety that is covalently linked to an acyl carrier protein (ACP). The chain is Enoyl-[acyl-carrier-protein] reductase [NADH] from Erwinia tasmaniensis (strain DSM 17950 / CFBP 7177 / CIP 109463 / NCPPB 4357 / Et1/99).